A 389-amino-acid chain; its full sequence is Glutamate 5-kinase (389 aa).

Residue Lys-26 coordinates ATP. Residues Ser-66, Asp-153, and Asn-167 each contribute to the substrate site. 187-188 (TD) lines the ATP pocket. The PUA domain maps to 293 to 371 (AGTLFLDQGA…EQIEWILGHR (79 aa)).

It belongs to the glutamate 5-kinase family.

It is found in the cytoplasm. The catalysed reaction is L-glutamate + ATP = L-glutamyl 5-phosphate + ADP. It functions in the pathway amino-acid biosynthesis; L-proline biosynthesis; L-glutamate 5-semialdehyde from L-glutamate: step 1/2. Its function is as follows. Catalyzes the transfer of a phosphate group to glutamate to form L-glutamate 5-phosphate. This chain is Glutamate 5-kinase, found in Rhodopirellula baltica (strain DSM 10527 / NCIMB 13988 / SH1).